We begin with the raw amino-acid sequence, 97 residues long: uncharacterized protein (97 aa).

Residues 1–21 form the signal peptide; that stretch reads MLLHGLGRMNIIFICFPSLAC.

This is an uncharacterized protein from Schizosaccharomyces pombe (strain 972 / ATCC 24843) (Fission yeast).